The primary structure comprises 209 residues: Large ribosomal subunit protein uL3 (209 aa).

Residue Gln150 is modified to N5-methylglutamine.

It belongs to the universal ribosomal protein uL3 family. In terms of assembly, part of the 50S ribosomal subunit. Forms a cluster with proteins L14 and L19. Methylated by PrmB.

In terms of biological role, one of the primary rRNA binding proteins, it binds directly near the 3'-end of the 23S rRNA, where it nucleates assembly of the 50S subunit. This Aliivibrio salmonicida (strain LFI1238) (Vibrio salmonicida (strain LFI1238)) protein is Large ribosomal subunit protein uL3.